The primary structure comprises 286 residues: 2-hydroxy-6-oxo-6-phenylhexa-2,4-dienoate hydrolase (286 aa).

Substrate is bound by residues 42–43, Asn51, Lys111, Ser180, and Arg190; that span reads GG. Positions 173 to 271 constitute an AB hydrolase-1 domain; that stretch reads NVFLFDQSLI…RCVHWAQWEH (99 aa). The active-site Proton acceptor is the His265. Trp266 lines the substrate pocket.

This sequence belongs to the AB hydrolase superfamily. BphD family. As to quaternary structure, homodimer.

It catalyses the reaction 2,6-dioxo-6-phenylhexa-3-enoate + H2O = 2-oxopent-4-enoate + benzoate + H(+). It functions in the pathway xenobiotic degradation; biphenyl degradation; 2-hydroxy-2,4-pentadienoate and benzoate from biphenyl: step 4/4. In terms of biological role, catalyzes an unusual C-C bond hydrolysis of 2-hydroxy-6-oxo-6-phenylhexa-2,4-dienoic acid (HOPDA) to produce benzoic acid and 2-hydroxy-2,4-pentadienoic acid (HPD). This chain is 2-hydroxy-6-oxo-6-phenylhexa-2,4-dienoate hydrolase, found in Delftia acidovorans (Pseudomonas acidovorans).